A 185-amino-acid polypeptide reads, in one-letter code: uncharacterized protein (185 aa).

The N-terminal 56 residues, 1–56 (MSSFTIPSPSSFSLSNSYNQTSPHSFTLRNSRSNFEFHRLRLDVESRRRSTSLRSN), are a transit peptide targeting the chloroplast. The disordered stretch occupies residues 48–67 (RRSTSLRSNCSTKGTDSGEN). Residues 52–64 (SLRSNCSTKGTDS) show a composition bias toward polar residues. Residues 105 to 138 (QAEQQKQVQEIQEEVLERAKKAKERAARETMEEQ) are a coiled coil.

It localises to the plastid. Its subcellular location is the chloroplast. The protein localises to the plastoglobule. This is an uncharacterized protein from Arabidopsis thaliana (Mouse-ear cress).